We begin with the raw amino-acid sequence, 214 residues long: Large ribosomal subunit protein bL25 (214 aa).

Residues I189–D214 are disordered. A compositionally biased stretch (acidic residues) spans D198–D214.

It belongs to the bacterial ribosomal protein bL25 family. CTC subfamily. In terms of assembly, part of the 50S ribosomal subunit; part of the 5S rRNA/L5/L18/L25 subcomplex. Contacts the 5S rRNA. Binds to the 5S rRNA independently of L5 and L18.

Its function is as follows. This is one of the proteins that binds to the 5S RNA in the ribosome where it forms part of the central protuberance. The chain is Large ribosomal subunit protein bL25 from Alkalilimnicola ehrlichii (strain ATCC BAA-1101 / DSM 17681 / MLHE-1).